The following is a 303-amino-acid chain: Oxygen-dependent coproporphyrinogen-III oxidase (303 aa).

Position 93 (Ser-93) interacts with substrate. The a divalent metal cation site is built by His-97 and His-107. His-107 functions as the Proton donor in the catalytic mechanism. Position 109–111 (109–111 (NVR)) interacts with substrate. 2 residues coordinate a divalent metal cation: His-146 and His-176. Residues 241-276 (YVEFNLVYDRGTLFGLQSGGRTESILMSLPPQVRWG) are important for dimerization. A substrate-binding site is contributed by 259–261 (GGR).

The protein belongs to the aerobic coproporphyrinogen-III oxidase family. In terms of assembly, homodimer. A divalent metal cation is required as a cofactor.

The protein resides in the cytoplasm. It catalyses the reaction coproporphyrinogen III + O2 + 2 H(+) = protoporphyrinogen IX + 2 CO2 + 2 H2O. Its pathway is porphyrin-containing compound metabolism; protoporphyrin-IX biosynthesis; protoporphyrinogen-IX from coproporphyrinogen-III (O2 route): step 1/1. In terms of biological role, involved in the heme biosynthesis. Catalyzes the aerobic oxidative decarboxylation of propionate groups of rings A and B of coproporphyrinogen-III to yield the vinyl groups in protoporphyrinogen-IX. This chain is Oxygen-dependent coproporphyrinogen-III oxidase, found in Pseudomonas putida (strain W619).